The chain runs to 129 residues: Follitropin subunit beta (129 aa).

The first 20 residues, 1-20 (MKTVQFCFLFCCWKAICCNS), serve as a signal peptide directing secretion. Intrachain disulfides connect Cys-21/Cys-69, Cys-35/Cys-84, Cys-38/Cys-122, Cys-46/Cys-100, Cys-50/Cys-102, and Cys-105/Cys-112. N-linked (GlcNAc...) asparagine glycans are attached at residues Asn-25 and Asn-42.

It belongs to the glycoprotein hormones subunit beta family. Heterodimer. The active follitropin is a heterodimer composed of an alpha chain/CGA shared with other hormones and a unique beta chain/FSHB shown here.

It localises to the secreted. In terms of biological role, together with the alpha chain CGA constitutes follitropin, the follicle-stimulating hormone, and provides its biological specificity to the hormone heterodimer. Binds FSHR, a G protein-coupled receptor, on target cells to activate downstream signaling pathways. Follitropin is involved in follicle development and spermatogenesis in reproductive organs. The sequence is that of Follitropin subunit beta (FSHB) from Saimiri boliviensis boliviensis (Bolivian squirrel monkey).